Reading from the N-terminus, the 227-residue chain is Interleukin-6 (227 aa).

Positions 1–22 (MASISYLLAPLVLAAVLQPTAG) are cleaved as a signal peptide. The disordered stretch occupies residues 24–45 (PLDAPTESPAGETSGEEAETGS). The cysteines at positions 93 and 103 are disulfide-linked.

This sequence belongs to the IL-6 superfamily. Component of a hexamer of two molecules each of IL6, IL6R and IL6ST; first binds to IL6R to associate with the signaling subunit IL6ST. After induction, highly expressed in spleen. Can also be expressed in kidney after incubation with PHA.

It localises to the secreted. Functionally, cytokine with a wide variety of biological functions in immunity, tissue regeneration, and metabolism. Binds to IL6R, then the complex associates to the signaling subunit IL6ST/gp130 to trigger the intracellular IL6-signaling pathway. The interaction with the membrane-bound IL6R and IL6ST stimulates 'classic signaling', whereas the binding of IL6 and soluble IL6R to IL6ST stimulates 'trans-signaling'. Alternatively, 'cluster signaling' occurs when membrane-bound IL6:IL6R complexes on transmitter cells activate IL6ST receptors on neighboring receiver cells. The polypeptide is Interleukin-6 (il6) (Takifugu rubripes (Japanese pufferfish)).